Reading from the N-terminus, the 435-residue chain is Arginine/serine-rich coiled-coil protein 2 (435 aa).

Over residues 1 to 27 the composition is skewed to basic and acidic residues; sequence MAASDTERDGLAPEKTSPDRDKKKEQS. A disordered region spans residues 1-230; that stretch reads MAASDTERDG…PSPPPFRGRN (230 aa). An N-acetylalanine modification is found at Ala-2. Ser-4 carries the post-translational modification Phosphoserine. Phosphothreonine occurs at positions 6 and 16. Phosphoserine is present on residues Ser-17, Ser-30, and Ser-32. A compositionally biased stretch (basic residues) spans 35–51; it reads ASKHHYSRSRSRSRERK. The segment covering 66-111 has biased composition (basic and acidic residues); that stretch reads RSKEARRHESKDKSSKKHKSEEHNDKEHSSDKGRERLNSSENGEDR. Phosphoserine is present on Ser-104. A compositionally biased stretch (basic residues) spans 112-214; the sequence is HKRKERKSSR…KRIEKPRRFS (103 aa). Residues 230–270 adopt a coiled-coil conformation; it reads NTAMDAQEALARRLERAKKLQEQREKEMVEKQKQQEIAAAA. A Glycyl lysine isopeptide (Lys-Gly) (interchain with G-Cter in SUMO1); alternate cross-link involves residue Lys-376. Residue Lys-376 forms a Glycyl lysine isopeptide (Lys-Gly) (interchain with G-Cter in SUMO2); alternate linkage. A Phosphoserine modification is found at Ser-377.

The protein belongs to the RSRC2 family.

The protein is Arginine/serine-rich coiled-coil protein 2 (RSRC2) of Pongo abelii (Sumatran orangutan).